Here is a 423-residue protein sequence, read N- to C-terminus: UDP-N-acetylglucosamine 1-carboxyvinyltransferase (423 aa).

22–23 (KN) provides a ligand contact to phosphoenolpyruvate. Arginine 98 lines the UDP-N-acetyl-alpha-D-glucosamine pocket. Catalysis depends on cysteine 122, which acts as the Proton donor. Cysteine 122 bears the 2-(S-cysteinyl)pyruvic acid O-phosphothioketal mark. UDP-N-acetyl-alpha-D-glucosamine contacts are provided by residues 127–131 (RPVDQ), aspartate 311, and isoleucine 333.

The protein belongs to the EPSP synthase family. MurA subfamily.

It is found in the cytoplasm. It catalyses the reaction phosphoenolpyruvate + UDP-N-acetyl-alpha-D-glucosamine = UDP-N-acetyl-3-O-(1-carboxyvinyl)-alpha-D-glucosamine + phosphate. Its pathway is cell wall biogenesis; peptidoglycan biosynthesis. Its function is as follows. Cell wall formation. Adds enolpyruvyl to UDP-N-acetylglucosamine. This chain is UDP-N-acetylglucosamine 1-carboxyvinyltransferase, found in Stenotrophomonas maltophilia (strain R551-3).